The chain runs to 602 residues: GTP-binding protein 1 (602 aa).

The residue at position 2 (S2) is a Phosphoserine. A tr-type G domain is found at F91–Y322. A G1 region spans residues G100 to S107. G100–S107 is a GTP binding site. The interval G139 to S143 is G2. Residues D185 to G188 form a G3 region. GTP contacts are provided by residues D185–H189 and T241–D244. The G4 stretch occupies residues T241–D244. Positions S299–V301 are G5. A compositionally biased stretch (polar residues) spans L506–K528. Residues L506 to C602 form a disordered region. Phosphoserine is present on S513. Residues G579–V589 show a composition bias toward basic residues.

Belongs to the TRAFAC class translation factor GTPase superfamily. Classic translation factor GTPase family. GTPBP1 subfamily. Interacts with EXOSC2/RRP4, EXOSC3/RRP40, EXOSC5/RRP46, HNRNPD, HNRNPR and SYNCRIP. Identified in a complex with AANAT mRNA, but does not bind mRNA by itself.

It localises to the cytoplasm. Its function is as follows. Promotes degradation of target mRNA species. Plays a role in the regulation of circadian mRNA stability. Binds GTP and has GTPase activity. In Pongo abelii (Sumatran orangutan), this protein is GTP-binding protein 1 (GTPBP1).